A 472-amino-acid chain; its full sequence is N(6)-adenine-specific methyltransferase METTL4 (472 aa).

It belongs to the MT-A70-like family.

It is found in the nucleus. It localises to the cytoplasm. The protein localises to the cytosol. Its subcellular location is the mitochondrion matrix. The catalysed reaction is a 2'-O-methyladenosine in U2 snRNA + S-adenosyl-L-methionine = an N(6)-methyl-2'-O-methyladenosine in U2 snRNA + S-adenosyl-L-homocysteine + H(+). It carries out the reaction a 2'-deoxyadenosine in DNA + S-adenosyl-L-methionine = an N(6)-methyl-2'-deoxyadenosine in DNA + S-adenosyl-L-homocysteine + H(+). N(6)-adenine-specific methyltransferase that can methylate both RNAs and DNA. Acts as a N(6)-adenine-specific RNA methyltransferase by catalyzing formation of N6,2'-O-dimethyladenosine (m6A(m)) on internal positions of U2 small nuclear RNA (snRNA): methylates the 6th position of adenine residues with a pre-deposited 2'-O-methylation. Internal m6A(m) methylation of snRNAs regulates RNA splicing. Also able to act as a N(6)-adenine-specific DNA methyltransferase by mediating methylation of DNA on the 6th position of adenine (N(6)-methyladenosine). The existence of N(6)-methyladenosine (m6A) on DNA is however unclear in mammals, and additional evidences are required to confirm the role of the N(6)-adenine-specific DNA methyltransferase activity of METTL4 in vivo. Acts as a regulator of mitochondrial transcript levels and mitochondrial DNA (mtDNA) copy number by mediating mtDNA N(6)-methylation: m6A on mtDNA reduces transcription by repressing TFAM DNA-binding and bending. N(6)-methyladenosine deposition by METTL4 regulates Polycomb silencing by triggering ubiquitination and degradation of sensor proteins ASXL1 and MPND, leading to inactivation of the PR-DUB complex and subsequent preservation of Polycomb silencing. The chain is N(6)-adenine-specific methyltransferase METTL4 from Homo sapiens (Human).